The chain runs to 454 residues: CCA-adding enzyme (454 aa).

Residues serine 53 and lysine 56 each contribute to the ATP site. Serine 53 and lysine 56 together coordinate CTP. Mg(2+)-binding residues include aspartate 65, aspartate 67, and aspartate 119. ATP-binding residues include histidine 142, lysine 161, and tyrosine 170. CTP-binding residues include histidine 142, lysine 161, and tyrosine 170.

It belongs to the tRNA nucleotidyltransferase/poly(A) polymerase family. Archaeal CCA-adding enzyme subfamily. As to quaternary structure, homodimer. The cofactor is Mg(2+).

It carries out the reaction a tRNA precursor + 2 CTP + ATP = a tRNA with a 3' CCA end + 3 diphosphate. It catalyses the reaction a tRNA with a 3' CCA end + 2 CTP + ATP = a tRNA with a 3' CCACCA end + 3 diphosphate. Its function is as follows. Catalyzes the addition and repair of the essential 3'-terminal CCA sequence in tRNAs without using a nucleic acid template. Adds these three nucleotides in the order of C, C, and A to the tRNA nucleotide-73, using CTP and ATP as substrates and producing inorganic pyrophosphate. tRNA 3'-terminal CCA addition is required both for tRNA processing and repair. Also involved in tRNA surveillance by mediating tandem CCA addition to generate a CCACCA at the 3' terminus of unstable tRNAs. While stable tRNAs receive only 3'-terminal CCA, unstable tRNAs are marked with CCACCA and rapidly degraded. This Thermococcus gammatolerans (strain DSM 15229 / JCM 11827 / EJ3) protein is CCA-adding enzyme.